Here is a 95-residue protein sequence, read N- to C-terminus: MKINKDEVEKVALLARLELTGEEAEMFTGQMDAILAYVDKLNELNTDGIVPTAHAVPMENAFRADEVRDSIGIDNALANAPKRAESFFRVPKVIE.

Belongs to the GatC family. As to quaternary structure, heterotrimer of A, B and C subunits.

It carries out the reaction L-glutamyl-tRNA(Gln) + L-glutamine + ATP + H2O = L-glutaminyl-tRNA(Gln) + L-glutamate + ADP + phosphate + H(+). The catalysed reaction is L-aspartyl-tRNA(Asn) + L-glutamine + ATP + H2O = L-asparaginyl-tRNA(Asn) + L-glutamate + ADP + phosphate + 2 H(+). In terms of biological role, allows the formation of correctly charged Asn-tRNA(Asn) or Gln-tRNA(Gln) through the transamidation of misacylated Asp-tRNA(Asn) or Glu-tRNA(Gln) in organisms which lack either or both of asparaginyl-tRNA or glutaminyl-tRNA synthetases. The reaction takes place in the presence of glutamine and ATP through an activated phospho-Asp-tRNA(Asn) or phospho-Glu-tRNA(Gln). The polypeptide is Aspartyl/glutamyl-tRNA(Asn/Gln) amidotransferase subunit C (Geotalea daltonii (strain DSM 22248 / JCM 15807 / FRC-32) (Geobacter daltonii)).